We begin with the raw amino-acid sequence, 671 residues long: Phosphoenolpyruvate carboxykinase (ATP) 1 (671 aa).

Residues 1–10 (MSAGNGNATN) are compositionally biased toward low complexity. A disordered region spans residues 1-44 (MSAGNGNATNGDGGFSFPKGPVMPKITTGAAKRGSGVCHDDSGP). An N-acetylserine modification is found at Ser2. The residue at position 62 (Ser62) is a Phosphoserine. Thr66 bears the Phosphothreonine mark. The segment at 100 to 127 (TRESGPKVVRGDPAEKKTDGSTTPAYAH) is disordered. Residues 108-118 (VRGDPAEKKTD) show a composition bias toward basic and acidic residues. Arg189 contributes to the substrate binding site. 2 residues coordinate Ca(2+): His270 and Asn271. Residues Tyr328 and Lys334 each coordinate substrate. ATP contacts are provided by residues Lys334, His353, and 369 to 377 (GLSGTGKTT). Lys334 and His353 together coordinate Mn(2+). A Mn(2+)-binding site is contributed by Asp390. Position 404 (Gly404) interacts with Ca(2+). Residues Glu418, Arg455, 574-575 (RI), Ile575, and Thr580 contribute to the ATP site. Arg455 contacts substrate.

This sequence belongs to the phosphoenolpyruvate carboxykinase (ATP) family. Monomer. Mn(2+) is required as a cofactor. Expressed in cotyledons, flowers, siliques, seeds, leaves, stems and roots. Localized in mid-veins.

It localises to the cytoplasm. The enzyme catalyses oxaloacetate + ATP = phosphoenolpyruvate + ADP + CO2. It functions in the pathway carbohydrate biosynthesis; gluconeogenesis. Its activity is regulated as follows. Allosterically activated by calcium. It may represent the only case of a monomeric, allosteric enzyme. Functionally, involved in the gluconeogenesis. Catalyzes the conversion of oxaloacetate (OAA) to phosphoenolpyruvate (PEP) through direct phosphoryl transfer between the nucleoside triphosphate and OAA. The sequence is that of Phosphoenolpyruvate carboxykinase (ATP) 1 from Arabidopsis thaliana (Mouse-ear cress).